A 116-amino-acid chain; its full sequence is U11-theraphotoxin-Hhn1b (116 aa).

The first 21 residues, 1–21 (MNTVRVAFLLVFVLAVSLGQA), serve as a signal peptide directing secretion. A propeptide spanning residues 22 to 74 (DKDENRMEMQEKTEQGKSYLDFAENLLLQKLEELEAKLLEEDSEESRNSRQKR) is cleaved from the precursor. Positions 61 to 83 (EEDSEESRNSRQKRCIGEGVPCD) are disordered. 3 disulfide bridges follow: cysteine 75–cysteine 90, cysteine 82–cysteine 95, and cysteine 89–cysteine 110.

It belongs to the neurotoxin 14 (magi-1) family. 01 (HNTX-16) subfamily. Expressed by the venom gland.

The protein localises to the secreted. Probable ion channel inhibitor. The sequence is that of U11-theraphotoxin-Hhn1b from Cyriopagopus hainanus (Chinese bird spider).